The chain runs to 198 residues: Thymidine kinase (198 aa).

ATP is bound by residues 16–23 (GGMYSGKS) and 89–92 (EEGQ). The active-site Proton acceptor is Glu90. Residues Cys146, Cys149, Cys184, and Cys187 each contribute to the Zn(2+) site.

The protein belongs to the thymidine kinase family. In terms of assembly, homotetramer.

It is found in the cytoplasm. It carries out the reaction thymidine + ATP = dTMP + ADP + H(+). This chain is Thymidine kinase, found in Dictyoglomus thermophilum (strain ATCC 35947 / DSM 3960 / H-6-12).